Consider the following 347-residue polypeptide: Probable tRNA N6-adenosine threonylcarbamoyltransferase (347 aa).

Residues His109, His113, and Tyr130 each coordinate a divalent metal cation. Residues 130-134, Asp162, Gly177, Glu181, and Asn277 contribute to the substrate site; that span reads YVSGG. Asp305 provides a ligand contact to a divalent metal cation.

The protein belongs to the KAE1 / TsaD family. Component of the EKC/KEOPS complex; the whole complex dimerizes. A divalent metal cation serves as cofactor.

It is found in the cytoplasm. The protein resides in the nucleus. The catalysed reaction is L-threonylcarbamoyladenylate + adenosine(37) in tRNA = N(6)-L-threonylcarbamoyladenosine(37) in tRNA + AMP + H(+). Functionally, component of the EKC/KEOPS complex that is required for the formation of a threonylcarbamoyl group on adenosine at position 37 (t(6)A37) in tRNAs that read codons beginning with adenine. The complex is probably involved in the transfer of the threonylcarbamoyl moiety of threonylcarbamoyl-AMP (TC-AMP) to the N6 group of A37. Likely plays a direct catalytic role in this reaction, but requires other protein(s) of the complex to fulfill this activity. The sequence is that of Probable tRNA N6-adenosine threonylcarbamoyltransferase from Drosophila melanogaster (Fruit fly).